Consider the following 92-residue polypeptide: Small ribosomal subunit protein uS19c (92 aa).

It belongs to the universal ribosomal protein uS19 family.

The protein localises to the plastid. In terms of biological role, protein S19 forms a complex with S13 that binds strongly to the 16S ribosomal RNA. This is Small ribosomal subunit protein uS19c from Cuscuta reflexa (Southern Asian dodder).